The chain runs to 241 residues: Tumor necrosis factor receptor superfamily member 18 (241 aa).

Residues 1-25 (MAQHGAMGAFRALCGLALLCALSLG) form the signal peptide. At 26 to 162 (QRPTGGPGCG…CVPGSPPAEP (137 aa)) the chain is on the extracellular side. Cystine bridges form between Cys-34/Cys-49, Cys-74/Cys-86, Cys-81/Cys-94, Cys-115/Cys-134, and Cys-128/Cys-153. TNFR-Cys repeat units follow at residues 34–72 (CGPGRLLLGTGTDARCCRVHTTRCCRDYPGEECCSEWDC), 74–112 (CVQPEFHCGDPCCTTCRHHPCPPGQGVQSQGKFSFGFQC), and 115–153 (CASGTFSGGHEGHCKPWTDCTQFGFLTVFPGNKTHNAVC). Asn-146 is a glycosylation site (N-linked (GlcNAc...) asparagine). Residues 163–183 (LGWLTVVLLAVAACVLLLTSA) traverse the membrane as a helical segment. Residues 184–241 (QLGLHIWQLRSQCMWPRETQLLLEVPPSTEDARSCQFPEEERGERSAEEKGRLGDLWV) lie on the Cytoplasmic side of the membrane. The tract at residues 214 to 241 (DARSCQFPEEERGERSAEEKGRLGDLWV) is disordered. Positions 222 to 241 (EEERGERSAEEKGRLGDLWV) are enriched in basic and acidic residues.

Binds to TRAF1, TRAF2, and TRAF3, but not TRAF5 and TRAF6. Binds through its C-terminus to SIVA1/SIVA. As to expression, expressed in lymph node, peripheral blood leukocytes and weakly in spleen.

It localises to the cell membrane. It is found in the secreted. In terms of biological role, receptor for TNFSF18. Seems to be involved in interactions between activated T-lymphocytes and endothelial cells and in the regulation of T-cell receptor-mediated cell death. Mediated NF-kappa-B activation via the TRAF2/NIK pathway. This Homo sapiens (Human) protein is Tumor necrosis factor receptor superfamily member 18 (TNFRSF18).